Consider the following 309-residue polypeptide: uncharacterized protein (309 aa).

Solcar repeat units lie at residues 6-83 (SDLY…LCHS), 97-211 (LTGY…FKRL), and 216-302 (NDKA…VSLL). Helical transmembrane passes span 12–32 (ITAG…FEYL), 47–67 (IILP…VAAF), 100–120 (YNLL…IIPF), 184–204 (VQGT…QFTA), 222–242 (VITG…IDVV), and 285–305 (VGIS…LLGF).

Belongs to the mitochondrial carrier (TC 2.A.29) family.

Its subcellular location is the mitochondrion inner membrane. This is an uncharacterized protein from Saccharomyces cerevisiae (strain ATCC 204508 / S288c) (Baker's yeast).